A 225-amino-acid polypeptide reads, in one-letter code: MAETKIPRATAKRLPIYYRYLNILLDADKKRVSSTELSEAVKVDSATIRRDFSYFGALGKRGYGYDVETLLAFFKKILNQDTLTNVALIGVGNLGHALLNFNFHKNSNVRISAAFDVNEAIANTVQSGVPVYPMTELKKQLIEQQIEIAILTVPTTVVQKITDDLVDANVKGIMNFTPLRISVPETVRVQNVDLTNELQTLIYFIEHYGQQLGDNGNDDENETED.

Positions 16 to 55 (IYYRYLNILLDADKKRVSSTELSEAVKVDSATIRRDFSYF) form a DNA-binding region, H-T-H motif. 90–95 (GVGNLG) serves as a coordination point for NAD(+).

Belongs to the transcriptional regulatory Rex family. As to quaternary structure, homodimer.

It localises to the cytoplasm. In terms of biological role, modulates transcription in response to changes in cellular NADH/NAD(+) redox state. This chain is Redox-sensing transcriptional repressor Rex, found in Lactiplantibacillus plantarum (strain ATCC BAA-793 / NCIMB 8826 / WCFS1) (Lactobacillus plantarum).